An 88-amino-acid polypeptide reads, in one-letter code: UPF0297 protein BPUM_2379 (88 aa).

This sequence belongs to the UPF0297 family.

The polypeptide is UPF0297 protein BPUM_2379 (Bacillus pumilus (strain SAFR-032)).